Here is a 289-residue protein sequence, read N- to C-terminus: Bifunctional protein FolD 2 (289 aa).

NADP(+) contacts are provided by residues 162–164, S187, and I228; that span reads GRS.

The protein belongs to the tetrahydrofolate dehydrogenase/cyclohydrolase family. As to quaternary structure, homodimer.

It carries out the reaction (6R)-5,10-methylene-5,6,7,8-tetrahydrofolate + NADP(+) = (6R)-5,10-methenyltetrahydrofolate + NADPH. The catalysed reaction is (6R)-5,10-methenyltetrahydrofolate + H2O = (6R)-10-formyltetrahydrofolate + H(+). The protein operates within one-carbon metabolism; tetrahydrofolate interconversion. In terms of biological role, catalyzes the oxidation of 5,10-methylenetetrahydrofolate to 5,10-methenyltetrahydrofolate and then the hydrolysis of 5,10-methenyltetrahydrofolate to 10-formyltetrahydrofolate. The chain is Bifunctional protein FolD 2 from Deinococcus geothermalis (strain DSM 11300 / CIP 105573 / AG-3a).